Consider the following 261-residue polypeptide: Cytochrome c oxidase subunit 3 (261 aa).

Topologically, residues M1 to P15 are mitochondrial matrix. Residues W16–W34 form a helical membrane-spanning segment. Topologically, residues F35–T40 are mitochondrial intermembrane. The chain crosses the membrane as a helical span at residues I41–T66. Over F67–T72 the chain is Mitochondrial matrix. A helical membrane pass occupies residues P73 to S105. Topologically, residues L106–E128 are mitochondrial intermembrane. Residues V129 to M152 traverse the membrane as a helical segment. Topologically, residues E153 to H155 are mitochondrial matrix. Residues R156–E183 traverse the membrane as a helical segment. Over A184 to D190 the chain is Mitochondrial intermembrane. Residues G191–L223 form a helical membrane-spanning segment. The Mitochondrial matrix segment spans residues K224–H232. The chain crosses the membrane as a helical span at residues F233 to I256. The Mitochondrial intermembrane portion of the chain corresponds to Y257 to S261.

It belongs to the cytochrome c oxidase subunit 3 family. Component of the cytochrome c oxidase (complex IV, CIV), a multisubunit enzyme composed of 14 subunits. The complex is composed of a catalytic core of 3 subunits MT-CO1, MT-CO2 and MT-CO3, encoded in the mitochondrial DNA, and 11 supernumerary subunits COX4I, COX5A, COX5B, COX6A, COX6B, COX6C, COX7A, COX7B, COX7C, COX8 and NDUFA4, which are encoded in the nuclear genome. The complex exists as a monomer or a dimer and forms supercomplexes (SCs) in the inner mitochondrial membrane with NADH-ubiquinone oxidoreductase (complex I, CI) and ubiquinol-cytochrome c oxidoreductase (cytochrome b-c1 complex, complex III, CIII), resulting in different assemblies (supercomplex SCI(1)III(2)IV(1) and megacomplex MCI(2)III(2)IV(2)).

The protein resides in the mitochondrion inner membrane. The catalysed reaction is 4 Fe(II)-[cytochrome c] + O2 + 8 H(+)(in) = 4 Fe(III)-[cytochrome c] + 2 H2O + 4 H(+)(out). In terms of biological role, component of the cytochrome c oxidase, the last enzyme in the mitochondrial electron transport chain which drives oxidative phosphorylation. The respiratory chain contains 3 multisubunit complexes succinate dehydrogenase (complex II, CII), ubiquinol-cytochrome c oxidoreductase (cytochrome b-c1 complex, complex III, CIII) and cytochrome c oxidase (complex IV, CIV), that cooperate to transfer electrons derived from NADH and succinate to molecular oxygen, creating an electrochemical gradient over the inner membrane that drives transmembrane transport and the ATP synthase. Cytochrome c oxidase is the component of the respiratory chain that catalyzes the reduction of oxygen to water. Electrons originating from reduced cytochrome c in the intermembrane space (IMS) are transferred via the dinuclear copper A center (CU(A)) of subunit 2 and heme A of subunit 1 to the active site in subunit 1, a binuclear center (BNC) formed by heme A3 and copper B (CU(B)). The BNC reduces molecular oxygen to 2 water molecules using 4 electrons from cytochrome c in the IMS and 4 protons from the mitochondrial matrix. The protein is Cytochrome c oxidase subunit 3 (MT-CO3) of Tragelaphus strepsiceros (Greater kudu).